Here is a 161-residue protein sequence, read N- to C-terminus: Beta-lactoglobulin-2 (161 aa).

2 disulfide bridges follow: Cys-66–Cys-159 and Cys-106–Cys-119.

It belongs to the calycin superfamily. Lipocalin family. In terms of assembly, monomer. As to expression, synthesized in mammary gland and secreted in milk.

The protein resides in the secreted. In terms of biological role, primary component of whey, it binds retinol and is probably involved in the transport of that molecule. This Canis lupus familiaris (Dog) protein is Beta-lactoglobulin-2 (LGB2).